A 133-amino-acid polypeptide reads, in one-letter code: Small ribosomal subunit protein uS11 (133 aa).

It belongs to the universal ribosomal protein uS11 family. In terms of assembly, part of the 30S ribosomal subunit.

In terms of biological role, located on the platform of the 30S subunit. In Hyperthermus butylicus (strain DSM 5456 / JCM 9403 / PLM1-5), this protein is Small ribosomal subunit protein uS11.